The sequence spans 215 residues: Cytidylate kinase (215 aa).

10 to 18 (GPAASGKGT) contacts ATP.

It belongs to the cytidylate kinase family. Type 1 subfamily.

It is found in the cytoplasm. The catalysed reaction is CMP + ATP = CDP + ADP. The enzyme catalyses dCMP + ATP = dCDP + ADP. The protein is Cytidylate kinase of Bartonella henselae (strain ATCC 49882 / DSM 28221 / CCUG 30454 / Houston 1) (Rochalimaea henselae).